Here is a 225-residue protein sequence, read N- to C-terminus: GTP:AMP phosphotransferase, mitochondrial (225 aa).

A GTP-binding site is contributed by 24 to 29 (GSGKGT). The NMP stretch occupies residues 45 to 74 (SSGDILRQEIKSESTLGREATTYIAQGKLL). Residues serine 46, arginine 51, 72–74 (KLL), 103–106 (GFPR), and glutamine 110 each bind AMP. The LID stretch occupies residues 144–181 (NRYVHVPSGRVYNLQYNPPKVPGLDDITGEPLTKRLDD). GTP is bound by residues arginine 145 and 154–155 (VY). The AMP site is built by arginine 178 and arginine 189. GTP is bound at residue serine 218.

The protein belongs to the adenylate kinase family. AK3 subfamily. Monomer.

The protein resides in the mitochondrion matrix. The enzyme catalyses a ribonucleoside 5'-triphosphate + AMP = a ribonucleoside 5'-diphosphate + ADP. Its function is as follows. Involved in maintaining the homeostasis of cellular nucleotides by catalyzing the interconversion of nucleoside phosphates. Has GTP:AMP phosphotransferase and ITP:AMP phosphotransferase activities. Does not accept ATP as phosphate donor. The sequence is that of GTP:AMP phosphotransferase, mitochondrial from Saccharomyces cerevisiae (strain ATCC 204508 / S288c) (Baker's yeast).